A 186-amino-acid chain; its full sequence is MSDAFDINDLKRRMEGAVNALKHDLGGLRTGRASASLLEPITIEAYGSTMPINQVANISVPESRMLSVSVWDKSMVGAVERAIRDSGLGLNPITDGMTLRIRLPELNEQRRKELVKIAHQYAEQGRIAARHVRRDGMDQLKKLEKDSVISQDESRVLSEKVQKLTDDTIAEMDKIVAVKEGEIMQV.

Belongs to the RRF family.

The protein localises to the cytoplasm. Its function is as follows. Responsible for the release of ribosomes from messenger RNA at the termination of protein biosynthesis. May increase the efficiency of translation by recycling ribosomes from one round of translation to another. This is Ribosome-recycling factor from Brucella melitensis biotype 2 (strain ATCC 23457).